The primary structure comprises 99 residues: Putative pterin-4-alpha-carbinolamine dehydratase (99 aa).

This sequence belongs to the pterin-4-alpha-carbinolamine dehydratase family.

The enzyme catalyses (4aS,6R)-4a-hydroxy-L-erythro-5,6,7,8-tetrahydrobiopterin = (6R)-L-erythro-6,7-dihydrobiopterin + H2O. The sequence is that of Putative pterin-4-alpha-carbinolamine dehydratase from Aquifex aeolicus (strain VF5).